The chain runs to 53 residues: ATP synthase protein 8 (53 aa).

The chain crosses the membrane as a helical span at residues 4 to 24; it reads MAPISWLLLFIIFSITFILFC.

It belongs to the ATPase protein 8 family. F-type ATPases have 2 components, CF(1) - the catalytic core - and CF(0) - the membrane proton channel.

It is found in the mitochondrion membrane. Its function is as follows. Mitochondrial membrane ATP synthase (F(1)F(0) ATP synthase or Complex V) produces ATP from ADP in the presence of a proton gradient across the membrane which is generated by electron transport complexes of the respiratory chain. F-type ATPases consist of two structural domains, F(1) - containing the extramembraneous catalytic core and F(0) - containing the membrane proton channel, linked together by a central stalk and a peripheral stalk. During catalysis, ATP synthesis in the catalytic domain of F(1) is coupled via a rotary mechanism of the central stalk subunits to proton translocation. Part of the complex F(0) domain. Minor subunit located with subunit a in the membrane. The protein is ATP synthase protein 8 (mt:ATPase8) of Drosophila mauritiana (Fruit fly).